A 357-amino-acid polypeptide reads, in one-letter code: Peptide chain release factor 1 (357 aa).

N5-methylglutamine is present on Q233. The tract at residues 284–305 (RSASISADRKSQVGTGDRSERI) is disordered.

It belongs to the prokaryotic/mitochondrial release factor family. Post-translationally, methylated by PrmC. Methylation increases the termination efficiency of RF1.

The protein resides in the cytoplasm. Peptide chain release factor 1 directs the termination of translation in response to the peptide chain termination codons UAG and UAA. This Clostridium novyi (strain NT) protein is Peptide chain release factor 1.